The following is a 362-amino-acid chain: tRNA 2-selenouridine synthase (362 aa).

Residues 12-135 (FLNDTPLLDV…LRRFLIDEME (124 aa)) enclose the Rhodanese domain. The S-selanylcysteine intermediate role is filled by C95.

It belongs to the SelU family. As to quaternary structure, monomer.

It catalyses the reaction 5-methylaminomethyl-2-thiouridine(34) in tRNA + selenophosphate + (2E)-geranyl diphosphate + H2O + H(+) = 5-methylaminomethyl-2-selenouridine(34) in tRNA + (2E)-thiogeraniol + phosphate + diphosphate. The enzyme catalyses 5-methylaminomethyl-2-thiouridine(34) in tRNA + (2E)-geranyl diphosphate = 5-methylaminomethyl-S-(2E)-geranyl-thiouridine(34) in tRNA + diphosphate. It carries out the reaction 5-methylaminomethyl-S-(2E)-geranyl-thiouridine(34) in tRNA + selenophosphate + H(+) = 5-methylaminomethyl-2-(Se-phospho)selenouridine(34) in tRNA + (2E)-thiogeraniol. The catalysed reaction is 5-methylaminomethyl-2-(Se-phospho)selenouridine(34) in tRNA + H2O = 5-methylaminomethyl-2-selenouridine(34) in tRNA + phosphate. Functionally, involved in the post-transcriptional modification of the uridine at the wobble position (U34) of tRNA(Lys), tRNA(Glu) and tRNA(Gln). Catalyzes the conversion of 2-thiouridine (S2U-RNA) to 2-selenouridine (Se2U-RNA). Acts in a two-step process involving geranylation of 2-thiouridine (S2U) to S-geranyl-2-thiouridine (geS2U) and subsequent selenation of the latter derivative to 2-selenouridine (Se2U) in the tRNA chain. In Alcanivorax borkumensis (strain ATCC 700651 / DSM 11573 / NCIMB 13689 / SK2), this protein is tRNA 2-selenouridine synthase.